We begin with the raw amino-acid sequence, 317 residues long: Protein PXR1 (317 aa).

The G-patch domain occupies 25 to 79 (TTGYGHRIMSAQGWTPGAFLGAPGAAHSSCYTAASASHIRVVLKDDTLGLGARPR). The segment at 152-268 (EQANKDDSSD…PNKQSAQQST (117 aa)) is disordered. The span at 154–170 (ANKDDSSDPKSRQETTQ) shows a compositional bias: basic and acidic residues. The segment covering 171–182 (KRPKKEKRKEKS) has biased composition (basic residues). Polar residues predominate over residues 192-219 (RSISSKPERGTINSANQTSDDESTNIVP). Basic residues predominate over residues 224–236 (SRKKEKKKKSKKR).

It belongs to the PINX1 family.

It localises to the nucleus. The protein resides in the nucleolus. Its function is as follows. Involved in rRNA-processing at A0, A1 and A2 sites and negatively regulates telomerase. The polypeptide is Protein PXR1 (PXR1) (Coccidioides immitis (strain RS) (Valley fever fungus)).